A 620-amino-acid polypeptide reads, in one-letter code: MAU2 chromatid cohesion factor homolog (620 aa).

TPR repeat units lie at residues phenylalanine 90–asparagine 123, glycine 445–glutamate 478, and serine 485–isoleucine 518.

This sequence belongs to the SCC4/mau-2 family. Component of the cohesin loading complex.

It is found in the nucleus. The protein resides in the nucleoplasm. Functionally, required for association of the cohesin complex with chromatin during interphase. Plays a role in sister chromatid cohesion and normal progression through prometaphase. The polypeptide is MAU2 chromatid cohesion factor homolog (Aedes aegypti (Yellowfever mosquito)).